The chain runs to 298 residues: Foldase protein PrsA 1 (298 aa).

Positions 1 to 19 (MKKWLIALAGVLLTFTLAG) are cleaved as a signal peptide. Cysteine 20 carries N-palmitoyl cysteine lipidation. Residue cysteine 20 is the site of S-diacylglycerol cysteine attachment. One can recognise a PpiC domain in the interval 136–232 (EPKVTVQHIL…NGYEIIRMIK (97 aa)).

This sequence belongs to the PrsA family.

The protein resides in the cell membrane. It catalyses the reaction [protein]-peptidylproline (omega=180) = [protein]-peptidylproline (omega=0). Functionally, plays a major role in protein secretion by helping the post-translocational extracellular folding of several secreted proteins. The polypeptide is Foldase protein PrsA 1 (prsA1) (Lactiplantibacillus plantarum (strain ATCC BAA-793 / NCIMB 8826 / WCFS1) (Lactobacillus plantarum)).